The primary structure comprises 702 residues: Zinc finger CCCH domain-containing protein 62 (702 aa).

Residues 1–77 (MAAPAADDDD…SYDDPTFDPA (77 aa)) are disordered. Over residues 18-54 (EEDDGEEEEGSEEEVESDDEEEEEGEGYDWSEEDDPE) the composition is skewed to acidic residues. The SAP domain occupies 132–166 (LEKLKVYECKAYLRMHKLRLSGNKEVLLTRIRGQI). Disordered regions lie at residues 288–349 (EKHA…NTVQ), 405–532 (SRTS…QQQP), 546–602 (GGTS…RETH), and 634–673 (QMSQDQYHHQQNHHQNYHGRQGMNGNQYHDRQNHNQNPQR). The span at 298–325 (KTREVRIKDKENERMRRLNRNKENKSKG) shows a compositional bias: basic and acidic residues. Polar residues-rich tracts occupy residues 326–349 (QDNMNKKSSQAVFPQHTVTTNTVQ) and 405–419 (SRTSTTQLINHQAPS). The span at 430-448 (QQQQQQQPPKSIKPAPIQQ) shows a compositional bias: low complexity. Polar residues-rich tracts occupy residues 472–502 (SQEQRAAVSQTSAARQDFTNHQAPPSRQHGG), 522–532 (QQAVSYTQQQP), 546–565 (GGTSTSRTGFMDRQSNNWGS), and 575–591 (PFTQKAKTYQHGSNGSG). The C3H1-type zinc-finger motif lies at 674–702 (FRPWKPCFIYQQQGWCPYGENCKFMHDLR).

This chain is Zinc finger CCCH domain-containing protein 62, found in Oryza sativa subsp. japonica (Rice).